Consider the following 156-residue polypeptide: Ribonuclease H (156 aa).

Residues 1 to 142 (MGKQVEIFTD…CDELARAAAN (142 aa)) enclose the RNase H type-1 domain. D10, E48, D70, and D134 together coordinate Mg(2+).

It belongs to the RNase H family. In terms of assembly, monomer. Requires Mg(2+) as cofactor.

The protein localises to the cytoplasm. It catalyses the reaction Endonucleolytic cleavage to 5'-phosphomonoester.. In terms of biological role, endonuclease that specifically degrades the RNA of RNA-DNA hybrids. The protein is Ribonuclease H of Photorhabdus laumondii subsp. laumondii (strain DSM 15139 / CIP 105565 / TT01) (Photorhabdus luminescens subsp. laumondii).